The chain runs to 279 residues: Phosphatidylglycerol--prolipoprotein diacylglyceryl transferase (279 aa).

The next 3 helical transmembrane spans lie at 22–42 (WYGIIIACGILLGYFIAQAAL), 52–72 (LIDIIFYSAIVGFIVARIYFV), and 89–109 (IWHGGIAIHGGLIGGLISGII). Arg-137 lines the a 1,2-diacyl-sn-glycero-3-phospho-(1'-sn-glycerol) pocket. 2 helical membrane-spanning segments follow: residues 203–223 (LGETFFGYLIWYSVGRFFVEA) and 235–255 (IRVAQLVSVVLILISVIFVIY).

It belongs to the Lgt family.

It is found in the cell membrane. The catalysed reaction is L-cysteinyl-[prolipoprotein] + a 1,2-diacyl-sn-glycero-3-phospho-(1'-sn-glycerol) = an S-1,2-diacyl-sn-glyceryl-L-cysteinyl-[prolipoprotein] + sn-glycerol 1-phosphate + H(+). Its pathway is protein modification; lipoprotein biosynthesis (diacylglyceryl transfer). Catalyzes the transfer of the diacylglyceryl group from phosphatidylglycerol to the sulfhydryl group of the N-terminal cysteine of a prolipoprotein, the first step in the formation of mature lipoproteins. The chain is Phosphatidylglycerol--prolipoprotein diacylglyceryl transferase from Staphylococcus epidermidis (strain ATCC 12228 / FDA PCI 1200).